Consider the following 206-residue polypeptide: Cytochrome b-245 chaperone 1 homolog (206 aa).

A helical transmembrane segment spans residues 21-43 (GIRSWSILVGIASVGLAAAYYSS). The interval 172 to 206 (ADDDYPDDDDGIEDLGLGDSSDSQDDPDGDDDEEH) is disordered. Acidic residues-rich tracts occupy residues 174-184 (DDYPDDDDGIE) and 193-206 (DSQDDPDGDDDEEH).

This sequence belongs to the CYBC1 family.

It localises to the endoplasmic reticulum membrane. Functionally, functions as a chaperone necessary for a stable expression of the CYBA and CYBB subunits of the cytochrome b-245 heterodimer. The polypeptide is Cytochrome b-245 chaperone 1 homolog (Danio rerio (Zebrafish)).